The primary structure comprises 201 residues: MKRLNREFYTRDTIEVAKDLLGKIIVVENETKLLGKIVEVEAYGGISDKAAHSYGNRKTERTKIMYEEGGYVYVFQIYGMYNCLNIVSSKKDVPEAVLIRAVEPIENIDDFSKNRYGKDFNELTKYQQKNITNGPGKLCMAMNITKKFNGLDLCKDNIYIVDNKEEFEIVASKRIGIDYAEEAKDYLWRFYIKDSKYVSKK.

The protein belongs to the DNA glycosylase MPG family.

The sequence is that of Putative 3-methyladenine DNA glycosylase from Clostridium novyi (strain NT).